The sequence spans 176 residues: Ribosome maturation factor RimM (176 aa).

Positions 100–172 (PDTYYDHQLV…IVEIDPPHGL (73 aa)) constitute a PRC barrel domain.

This sequence belongs to the RimM family. Binds ribosomal protein uS19.

It is found in the cytoplasm. In terms of biological role, an accessory protein needed during the final step in the assembly of 30S ribosomal subunit, possibly for assembly of the head region. Essential for efficient processing of 16S rRNA. May be needed both before and after RbfA during the maturation of 16S rRNA. It has affinity for free ribosomal 30S subunits but not for 70S ribosomes. The protein is Ribosome maturation factor RimM of Mycobacterium bovis (strain ATCC BAA-935 / AF2122/97).